The chain runs to 243 residues: L-fucose operon activator (243 aa).

Residues 1 to 57 (MKAARQQAIVDLLLNHTSLTTEALSEQLKVSKETIRRDLNELQTQGKILRNHGRAKY) enclose the HTH deoR-type domain. The H-T-H motif DNA-binding region spans 19–38 (LTTEALSEQLKVSKETIRRD).

Transcriptional activator of the fuc operon. This is L-fucose operon activator (fucR) from Escherichia coli (strain K12).